Here is a 515-residue protein sequence, read N- to C-terminus: mRNA export factor ICP27 homolog (515 aa).

Zn(2+) is bound by residues Cys230, His335, Cys337, and Cys342. Residues 230–342 form a CHC2-type zinc finger; sequence CVFNDNGHGD…SNHKCDDVSC (113 aa). Positions 398–408 are enriched in polar residues; sequence YSTNHDLPQTS. Residues 398–422 are disordered; sequence YSTNHDLPQTSHRSHKNHGTPKVKS. The span at 409 to 422 shows a compositional bias: basic residues; that stretch reads HRSHKNHGTPKVKS.

The protein belongs to the HHV-1 ICP27 protein family.

The protein resides in the virion tegument. It localises to the virion. It is found in the host nucleus. The protein localises to the host cytoplasm. Its function is as follows. Immediate early (EI) protein that plays many roles during productive infection including regulation of viral gene expression and nuclear export of intronless viral RNAs. The polypeptide is mRNA export factor ICP27 homolog (Human herpesvirus 6A (strain Uganda-1102) (HHV-6 variant A)).